A 347-amino-acid chain; its full sequence is Zinc-type alcohol dehydrogenase-like protein C16A3.02c (347 aa).

It belongs to the zinc-containing alcohol dehydrogenase family. Quinone oxidoreductase subfamily.

It is found in the golgi apparatus. The protein resides in the endoplasmic reticulum. This is Zinc-type alcohol dehydrogenase-like protein C16A3.02c from Schizosaccharomyces pombe (strain 972 / ATCC 24843) (Fission yeast).